Reading from the N-terminus, the 268-residue chain is Tryptophan synthase alpha chain (268 aa).

Catalysis depends on proton acceptor residues Glu49 and Asp60.

This sequence belongs to the TrpA family. In terms of assembly, tetramer of two alpha and two beta chains.

It carries out the reaction (1S,2R)-1-C-(indol-3-yl)glycerol 3-phosphate + L-serine = D-glyceraldehyde 3-phosphate + L-tryptophan + H2O. Its pathway is amino-acid biosynthesis; L-tryptophan biosynthesis; L-tryptophan from chorismate: step 5/5. The alpha subunit is responsible for the aldol cleavage of indoleglycerol phosphate to indole and glyceraldehyde 3-phosphate. In Escherichia coli (strain SE11), this protein is Tryptophan synthase alpha chain.